Consider the following 201-residue polypeptide: ATP-dependent Clp protease proteolytic subunit (201 aa).

Catalysis depends on Ser-101, which acts as the Nucleophile. Residue His-126 is part of the active site.

The protein belongs to the peptidase S14 family. As to quaternary structure, fourteen ClpP subunits assemble into 2 heptameric rings which stack back to back to give a disk-like structure with a central cavity, resembling the structure of eukaryotic proteasomes.

The protein localises to the cytoplasm. The catalysed reaction is Hydrolysis of proteins to small peptides in the presence of ATP and magnesium. alpha-casein is the usual test substrate. In the absence of ATP, only oligopeptides shorter than five residues are hydrolyzed (such as succinyl-Leu-Tyr-|-NHMec, and Leu-Tyr-Leu-|-Tyr-Trp, in which cleavage of the -Tyr-|-Leu- and -Tyr-|-Trp bonds also occurs).. Cleaves peptides in various proteins in a process that requires ATP hydrolysis. Has a chymotrypsin-like activity. Plays a major role in the degradation of misfolded proteins. The chain is ATP-dependent Clp protease proteolytic subunit from Francisella philomiragia subsp. philomiragia (strain ATCC 25017 / CCUG 19701 / FSC 153 / O#319-036).